Reading from the N-terminus, the 648-residue chain is Serine/threonine-protein kinase plk-1 (648 aa).

Residues 1-24 (MNRLPNIAKPPQKSNQRKEKAPPE) form a disordered region. Residues 38–289 (YEKGRFLGKG…AKQVQRDGFF (252 aa)) form the Protein kinase domain. ATP is bound by residues 44-52 (LGKGGFAHC) and Lys67. Residue Asp161 is the Proton acceptor of the active site. POLO box domains follow at residues 412–492 (WISK…YMND) and 514–596 (TLRV…RLMS). The span at 612–629 (PRSMAAARSASAGSRGPN) shows a compositional bias: low complexity.

The protein belongs to the protein kinase superfamily. Ser/Thr protein kinase family. CDC5/Polo subfamily. As to quaternary structure, interacts with mex-5, mex-6 and spat-1. As to expression, embryos.

It is found in the cytoplasm. It localises to the cytoskeleton. Its subcellular location is the microtubule organizing center. The protein resides in the centrosome. The protein localises to the midbody. It is found in the nucleus. It localises to the chromosome. Its subcellular location is the centromere. The protein resides in the kinetochore. It catalyses the reaction L-seryl-[protein] + ATP = O-phospho-L-seryl-[protein] + ADP + H(+). It carries out the reaction L-threonyl-[protein] + ATP = O-phospho-L-threonyl-[protein] + ADP + H(+). In terms of biological role, required for oocyte nuclear envelope breakdown before entry of oocyte into spermatheca. In meiotic cells, required for spindle dynamics and probably for spindle attachment to the chromosomes. Zygotic role in the development of the germline and nerve cord. In mitotic cells, plays a role in spindle organization and centrosome maturation. Involved in asymmetric nuclear localization of cdc-25.1 during embryogenesis which affects cell division timing. Together with plk-2, regulates cytoplasm polarity in early embryos. May play a minor role in chromosome pairing and synapsis during oocyte meiosis I. In Caenorhabditis elegans, this protein is Serine/threonine-protein kinase plk-1 (plk-1).